Consider the following 306-residue polypeptide: 4-hydroxybenzoate geranyltransferase 2 (306 aa).

The next 8 membrane-spanning stretches (helical) occupy residues 38-58, 61-81, 119-139, 153-173, 178-198, 229-249, 251-271, and 285-305; these read IGSWLLAWPAFWSVALIADLG, PKMLAIFGWWAVWIRGAGCTI, LFIGLGVLYQFNILTLALAIV, ITYWPQAFLGVMISWGALLGS, GSVVPSIAYPLYISSFFWTLV, IWITWFGIGCIGALLLGGFIV, IGLPYYVFLAIATGQLIWQIF, and FVSNQWFGAIIFTGILVGRLF.

This sequence belongs to the UbiA prenyltransferase family. Requires Mg(2+) as cofactor. As to expression, expressed only in roots.

It is found in the endoplasmic reticulum membrane. The catalysed reaction is 4-hydroxybenzoate + (2E)-geranyl diphosphate = 3-geranyl-4-hydroxybenzoate + diphosphate. Functionally, prenyltransferase involved in the biosynthesis of shikonin, a naphthoquinone secondary metabolite. Could accept only geranyl diphosphate and not dimethylallyl diphosphate, farnesyl diphosphate, or geranylgeranyl diphosphate as substrate. The protein is 4-hydroxybenzoate geranyltransferase 2 (PGT-2) of Lithospermum erythrorhizon (Purple gromwell).